A 262-amino-acid polypeptide reads, in one-letter code: MSKVFDAKVLAVYMVAPNTYYMEFDAPDIARLAVPGQFVHVRCGETNDPLLRRPISIHMVSRPKGVLALLFRVVGKGTEILSQQKPGDRVNMMGPLGRGFTLPLPGSKVAVAAGGIGAAPLVFLVQELANIKCQVTVYLGARDKRSILCDGQFIQMEAEVVIATDDGSLGFKGTVPELMKRHMDWRKTAMTYVCGPGIMMKEISTMLAEADVPGEVSLEERMGCGVGACLSCAVKISHHGQISNKRACFEGPVFPSWQVVWE.

The 101-residue stretch at 2–102 (SKVFDAKVLA…MGPLGRGFTL (101 aa)) folds into the FAD-binding FR-type domain. FAD-binding positions include 53-56 (RPIS), 70-72 (LFR), and 77-78 (GT). [2Fe-2S] cluster-binding residues include C224, C229, C232, and C248.

The protein belongs to the PyrK family. As to quaternary structure, heterotetramer of 2 PyrK and 2 PyrD type B subunits. However, the metal reductase complex seems to be composed of a heterooctamer of 4 PyrK and 4 PyrD subunits. It depends on FAD as a cofactor. [2Fe-2S] cluster serves as cofactor.

It localises to the cytoplasm. The protein operates within pyrimidine metabolism; UMP biosynthesis via de novo pathway; orotate from (S)-dihydroorotate (NAD(+) route): step 1/1. Its function is as follows. Responsible for channeling the electrons from the oxidation of dihydroorotate from the FMN redox center in the PyrD type B subunit to the ultimate electron acceptor NAD(+). Together with PyrD, also forms a metal reductase complex able to reduce Fe(III)-chelates to Fe(II)-chelates, as well as soluble Cr(VI) and U(VI), using NADH as electron donor. To a lesser extent, can also use NADPH as an electron donor. Is unable to reduce riboflavin and FMN with NADH as electron donor. May have an in vivo role in metal reduction in D.reducens, which is an organism capable of reducing contaminant heavy metals and radionuclides. The sequence is that of Dihydroorotate dehydrogenase B (NAD(+)), electron transfer subunit from Desulforamulus reducens (strain ATCC BAA-1160 / DSM 100696 / MI-1) (Desulfotomaculum reducens).